The sequence spans 441 residues: Acetyltransferase TRI7 (441 aa).

Helical transmembrane passes span 14–34 (GILY…LIII), 75–95 (SLTL…LVLT), 158–178 (IWFI…LDII), 306–326 (IAFV…FCWG), 336–356 (LAFF…QALC), 377–397 (LVGY…YLYH), and 421–441 (TATM…GIEV).

It belongs to the wax synthase family.

The protein localises to the membrane. Its pathway is sesquiterpene biosynthesis; trichothecene biosynthesis. Its function is as follows. Acetyltransferase; part of the core gene cluster that mediates the biosynthesis of trichothecenes, a very large family of chemically related bicyclic sesquiterpene compounds acting as mycotoxins, including T2-toxin. The biosynthesis of trichothecenes begins with the cyclization of farnesyl diphosphate to trichodiene and is catalyzed by the trichodiene synthase TRI5. Trichodiene undergoes a series of oxygenations catalyzed by the cytochrome P450 monooxygenase TRI4. TRI4 controls the addition of four oxygens at C-2, C-3, C-11, and the C-12, C-13-epoxide to form the intermediate isotrichotriol. Isotrichotriol then undergoes a non-enzymatic isomerization and cyclization to form isotrichodermol. During this process, the oxygen at the C-2 position becomes the pyran ring oxygen and the hydroxyl group at C-11 is lost. More complex type A trichothecenes are built by modifying isotrichodermol through a series of paired hydroxylation and acetylation or acylation steps. Isotrichodermol is converted to isotrichodermin by the acetyltransferase TRI101. TRI101 encodes a C-3 transacetylase that acts as a self-protection or resistance factor during biosynthesis and that the presence of a free C-3 hydroxyl group is a key component of Fusarium trichothecene phytotoxicity. A second hydroxyl group is added to C-15 by the trichothecene C-15 hydroxylase TRI11, producing 15-decalonectrin, which is then acetylated by TRI3, producing calonectrin. A third hydroxyl group is added at C-4 by the cytochrome P450 monooxygenase TRI13, converting calonectrin to 3,15-diacetoxyspirpenol, which is subsequently acetylated by the acetyltransferase TRI7. A fourth hydroxyl group is added to C-8 by the cytochrome P450 monooxygenase TRI1, followed by the addition of an isovaleryl moiety by TRI16. Finally, the acetyl group is removed from the C-3 position by the trichothecene C-3 esterase TRI8 to produce T-2 toxin. In Fusarium sporotrichioides, this protein is Acetyltransferase TRI7.